Reading from the N-terminus, the 381-residue chain is MELNSQFNAFLTNIRPTDPQKEDWKGGAKTLRERLNNYEPLKDIVVSTFLQGSIRRSTAIRPLNGKRPDVDIVVVTNLDHNQIAPQEAMDLFVPFLEKYYPEKWVPQGRSFGITLSYVELDLVITAIPASGEEKNLLEQLYRSESVLTVNSLEEQKDWRLNKSWKPSESGLFISNSANIQDAPLSEWKAHPLVLPDRDENKWGRTHPLAQIRWTAEKNRACNGHYINLVRAVKWWRQQNSDNLPKYPKGYPLEHLIGNALDDGTPSMGKGLVQLIDTFLSRWAYVYSLRSKPSLPDHGVEEHDVLARLSAEDFCLFYEGLEDAAIIARSALASQDPKESAELWRKLFGTKFPFPGPQGGDRSGGFTAPTQPAEPQKTGRFA.

GTP is bound by residues Ser-53 and Arg-56. Active-site residues include Asp-69 and Asp-71. Residues Asp-69 and Asp-71 each contribute to the Mg(2+) site. Residue Arg-109 coordinates GTP. Residue Asp-121 is part of the active site. Residues Asp-121 and Asp-196 each coordinate Mg(2+). Arg-197, Arg-204, Thr-205, Gln-210, and Arg-307 together coordinate GTP. The segment at 348-381 (GTKFPFPGPQGGDRSGGFTAPTQPAEPQKTGRFA) is disordered.

Belongs to the CD-NTase family. D02 subfamily. Requires Mg(2+) as cofactor.

It carries out the reaction GTP + 2 ATP = 3',3',3'-cAAG + 3 diphosphate. Its function is as follows. Cyclic nucleotide synthase (second messenger synthase) of a CBASS antivirus system. CBASS (cyclic oligonucleotide-based antiphage signaling system) provides immunity against bacteriophage. The CD-NTase protein synthesizes cyclic nucleotides in response to infection; these serve as specific second messenger signals. The signals activate a diverse range of effectors, leading to bacterial cell death and thus abortive phage infection. Cyclic nucleotide synthase, synthesizes a tricyclic nucleotide with AMP and GMP moieties, probably 3',3',3'-cyclic AMP-AMP-GMP (3'3'3'-cAAG). Controls the activity of the associated CBASS effector protein. The polypeptide is Probable cyclic AMP-AMP-GMP nucleotide synthase (Salmonella paratyphi B (Salmonella enterica subsp. enterica serovar Paratyphi B)).